The following is a 359-amino-acid chain: Ribosomal RNA large subunit methyltransferase M (359 aa).

S-adenosyl-L-methionine is bound by residues S186, 219–222, D238, D258, and D275; that span reads CPGG. K304 (proton acceptor) is an active-site residue.

This sequence belongs to the class I-like SAM-binding methyltransferase superfamily. RNA methyltransferase RlmE family. RlmM subfamily. Monomer.

Its subcellular location is the cytoplasm. The enzyme catalyses cytidine(2498) in 23S rRNA + S-adenosyl-L-methionine = 2'-O-methylcytidine(2498) in 23S rRNA + S-adenosyl-L-homocysteine + H(+). Its function is as follows. Catalyzes the 2'-O-methylation at nucleotide C2498 in 23S rRNA. This is Ribosomal RNA large subunit methyltransferase M from Aliivibrio fischeri (strain MJ11) (Vibrio fischeri).